Here is a 1321-residue protein sequence, read N- to C-terminus: Bile salt export pump (1321 aa).

Over 1–62 the chain is Cytoplasmic; that stretch reads MSDSVILRSV…FSSSKDNWLM (62 aa). Positions 62-385 constitute an ABC transmembrane type-1 1 domain; sequence MFMGSVCALL…ASSCLEIFST (324 aa). The chain crosses the membrane as a helical span at residues 63 to 83; that stretch reads FMGSVCALLHGMAQPGMIIVF. The Extracellular segment spans residues 84-147; it reads GILTDIFVEY…VIKFSGIYAG (64 aa). Residues Asn109, Asn116, Asn122, and Asn125 are each glycosylated (N-linked (GlcNAc...) asparagine). A helical membrane pass occupies residues 148-168; sequence VGVAVLILGYFQIRLWVITGA. Over 169 to 215 the chain is Cytoplasmic; the sequence is RQIRKMRKFYFRRIMRMEIGWFDCTSVGELNSRFSDDINKIDEAIAD. The helical transmembrane segment at 216-236 threads the bilayer; sequence QMALFLQRLSTALSGLLLGFY. The Extracellular portion of the chain corresponds to 237-240; sequence RGWK. Residues 241-261 traverse the membrane as a helical segment; it reads LTLVILAVSPLIGIGAAVIGL. Residues 262–319 are Cytoplasmic-facing; it reads SVAKFTELELKAYAKAGSIADEVLSSIRTVAAFGGENKEVERYEKNLMFAQRWGIWKG. The chain crosses the membrane as a helical span at residues 320–340; sequence MVMGFFTGYMWCLIFFCYALA. Topologically, residues 341 to 353 are extracellular; the sequence is FWYGSRLVLDEGE. The chain crosses the membrane as a helical span at residues 354–374; that stretch reads YTPGTLIQIFLCVIIAAMNIG. Topologically, residues 375 to 755 are cytoplasmic; the sequence is NASSCLEIFS…KYNISEWPYI (381 aa). The ABC transporter 1 domain occupies 420–656; sequence IEFHNVTFHY…KGVYFMLVTL (237 aa). 455–462 provides a ligand contact to ATP; that stretch reads GSSGAGKS. Phosphothreonine is present on Thr586. A Phosphoserine modification is found at Ser587. The segment at 651-674 is interaction with HAX1; sequence FMLVTLQSQEDNTHKETGIKGKDT. Residues 662 to 684 show a composition bias toward basic and acidic residues; the sequence is NTHKETGIKGKDTTEGDTPERTF. The disordered stretch occupies residues 662–722; sequence NTHKETGIKG…PLAIGDHKSS (61 aa). Phosphoserine occurs at positions 692, 703, and 706. Residues 755–1043 enclose the ABC transmembrane type-1 2 domain; it reads ILVGALCAAI…TFSYTPSYAK (289 aa). Residues 756 to 776 traverse the membrane as a helical segment; that stretch reads LVGALCAAINGAVTPIYSLLF. The Extracellular portion of the chain corresponds to 777–794; that stretch reads SQILKTFSLVDKEQQRSE. The chain crosses the membrane as a helical span at residues 795–815; that stretch reads IYSMCLFFVILGCVSLFTQFL. The Cytoplasmic segment spans residues 816-869; that stretch reads QGYNFAKSGELLTKRLRKFGFKAMLRQDIGWFDDLKNNPGVLTTRLATDASQVQ. Helical transmembrane passes span 870-890 and 891-911; these read GATGSQVGMMVNSFTNIFVAV and LIAFLFNWKLSLVISVFFPFL. The Cytoplasmic segment spans residues 912-979; that stretch reads ALSGAVQTKM…SYKTAIRKAN (68 aa). Residues 980 to 1000 traverse the membrane as a helical segment; sequence VYGLCYAFSQGISFLANSAAY. The Extracellular portion of the chain corresponds to 1001–1011; sequence RYGGYLIVYED. The chain crosses the membrane as a helical span at residues 1012–1032; that stretch reads LNFSYVFRVVSSIAMSATAVG. The Cytoplasmic portion of the chain corresponds to 1033-1321; sequence RTFSYTPSYA…KLVITGAPIS (289 aa). An ABC transporter 2 domain is found at 1078-1316; the sequence is IDFIDCKFTY…KGAYYKLVIT (239 aa). Position 1113 to 1120 (1113 to 1120) interacts with ATP; that stretch reads GSSGCGKS. Ser1321 bears the Phosphoserine mark.

This sequence belongs to the ABC transporter superfamily. ABCB family. Multidrug resistance exporter (TC 3.A.1.201) subfamily. Interacts with HAX1. Interacts with the adapter protein complex 2 (AP-2) throught AP2A2 or AP2A1; this interaction regulates cell membrane expression of ABCB11 through its internalization in a clathrin-dependent manner and its subsequent degradation. N-glycosylated. Post-translationally, ubiquitinated; short-chain ubiquitination regulates cell-Surface expression of ABCB11. As to expression, expressed predominantly, if not exclusively in the liver, where it was further localized to the canalicular microvilli and to subcanalicular vesicles of the hepatocytes by in situ.

It is found in the apical cell membrane. Its subcellular location is the recycling endosome membrane. It localises to the endosome. The protein resides in the cell membrane. It carries out the reaction cholate(in) + ATP + H2O = cholate(out) + ADP + phosphate + H(+). It catalyses the reaction taurocholate(in) + ATP + H2O = taurocholate(out) + ADP + phosphate + H(+). The catalysed reaction is glycocholate(in) + ATP + H2O = glycocholate(out) + ADP + phosphate + H(+). The enzyme catalyses glycochenodeoxycholate(in) + ATP + H2O = glycochenodeoxycholate(out) + ADP + phosphate + H(+). It carries out the reaction taurochenodeoxycholate(in) + ATP + H2O = taurochenodeoxycholate(out) + ADP + phosphate + H(+). It catalyses the reaction glycoursodeoxycholate(in) + ATP + H2O = glycoursodeoxycholate(out) + ADP + phosphate + H(+). The catalysed reaction is tauroursodeoxycholate(in) + ATP + H2O = tauroursodeoxycholate(out) + ADP + phosphate + H(+). The enzyme catalyses taurodeoxycholate(in) + ATP + H2O = taurodeoxycholate(out) + ADP + phosphate + H(+). It carries out the reaction taurolithocholate 3-sulfate(in) + ATP + H2O = taurolithocholate 3-sulfate(out) + ADP + phosphate + H(+). It catalyses the reaction pravastatin(in) + ATP + H2O = pravastatin(out) + ADP + phosphate + H(+). The uptake of taurocholate is inhibited by taurolithocholate sulfate with an IC(50) of 9 uM. Pravastatin competitively inhibits the transport of taurocholic acid. Cyclosporin A, glibenclamide, rifampicin and troglitazonestrongly competitively inhibit the transport activity of taurocholate. The canalicular transport activity of taurocholate is strongly dependent on canalicular membrane cholesterol content. The uptake of taurocholate is increased by short- and medium-chain fatty acids. Cholesterol increases transport capacity of taurocholate without affecting the affinity for the substrate. Functionally, catalyzes the transport of the major hydrophobic bile salts, such as taurine and glycine-conjugated cholic acid across the canalicular membrane of hepatocytes in an ATP-dependent manner, therefore participates in hepatic bile acid homeostasis and consequently to lipid homeostasis through regulation of biliary lipid secretion in a bile salts dependent manner. Transports taurine-conjugated bile salts more rapidly than glycine-conjugated bile salts. Also transports non-bile acid compounds, such as pravastatin and fexofenadine in an ATP-dependent manner and may be involved in their biliary excretion. The polypeptide is Bile salt export pump (Mus musculus (Mouse)).